A 279-amino-acid polypeptide reads, in one-letter code: Lacto-N-neotetraose biosynthesis glycosyltransferase LgtB (279 aa).

This sequence belongs to the glycosyltransferase 25 family.

Its pathway is glycan metabolism; lacto-N-neotetraose biosynthesis. The protein operates within bacterial outer membrane biogenesis; lipooligosaccharide biosynthesis. Adds the second galactose to the lacto-N-tetraose chain in lipooligosaccharide (LOS). The protein is Lacto-N-neotetraose biosynthesis glycosyltransferase LgtB (lgtB) of Neisseria gonorrhoeae.